The primary structure comprises 63 residues: Small ribosomal subunit protein bS21 (63 aa).

The protein belongs to the bacterial ribosomal protein bS21 family.

In Syntrophus aciditrophicus (strain SB), this protein is Small ribosomal subunit protein bS21.